We begin with the raw amino-acid sequence, 2037 residues long: Protein SWOLLEN 1 (2037 aa).

Disordered stretches follow at residues 141 to 179 (VEPG…VKTD), 454 to 487 (REGG…NDRD), 504 to 531 (SVGY…TDKS), 567 to 637 (KTSS…KDAV), 686 to 705 (SLPI…DNTA), 837 to 893 (VGSP…SGGK), 1011 to 1045 (ATPE…PMIP), 1148 to 1197 (KHVQ…ESGP), 1729 to 1748 (SGET…KRPR), 1793 to 1812 (KSTR…TGLQ), and 1841 to 2037 (EAST…QSKK). Over residues 147-157 (SHERSLSKEET) the composition is skewed to basic and acidic residues. Positions 158–176 (VNLQPNPSVDDTPGESSVV) are enriched in polar residues. Residues 454-466 (REGGVSKKSDNEG) are compositionally biased toward basic and acidic residues. Positions 504 to 514 (SVGYVSGGSTS) are enriched in low complexity. Positions 515–526 (ELAESESQSDSI) are enriched in polar residues. The segment covering 841–852 (STSSLDKTAAKS) has biased composition (low complexity). Basic residues predominate over residues 853-865 (SKAKSERKPRRTS). 2 stretches are compositionally biased toward polar residues: residues 1025–1041 (ETPS…SGTN) and 1151–1171 (QSGT…TSTV). The segment covering 1179-1189 (TRVKSRKRKKM) has biased composition (basic residues). Residues 1794–1805 (STREENKPDPLR) show a composition bias toward basic and acidic residues. Polar residues-rich tracts occupy residues 1874–1886 (KTIS…TISR), 1942–1964 (EEQT…STNK), and 2013–2023 (LQTSMMTSKIP). The segment covering 2028–2037 (SKSHLSQSKK) has biased composition (basic residues).

Interacts with importin alpha IMPA1 and IMPA2, required for nuclear-localized proteins import. In terms of tissue distribution, mainly expressed in seedlings, flower buds and stems, and, to a lower extent, in leaves and siliques.

Its subcellular location is the nucleus. Under salt stress, appears to prevent the accumulation of reactive oxygen species (ROS) in roots and required for the maintenance of cell wall integrity (cellulose, pectin and lignin composition) by interacting with importin alpha (e.g. IMPA1 and IMPA2) and binding to the promoter of several ROS- and cell wall-related genes to regulate their expression. Necessary for cells organization in meristems and root elongation zones as well as for root elongation in high salinity, but not upon osmotic stress. This chain is Protein SWOLLEN 1, found in Arabidopsis thaliana (Mouse-ear cress).